The sequence spans 278 residues: Tryptophan synthase alpha chain (278 aa).

Residues glutamate 50 and aspartate 61 each act as proton acceptor in the active site.

The protein belongs to the TrpA family. Tetramer of two alpha and two beta chains.

It catalyses the reaction (1S,2R)-1-C-(indol-3-yl)glycerol 3-phosphate + L-serine = D-glyceraldehyde 3-phosphate + L-tryptophan + H2O. It participates in amino-acid biosynthesis; L-tryptophan biosynthesis; L-tryptophan from chorismate: step 5/5. Functionally, the alpha subunit is responsible for the aldol cleavage of indoleglycerol phosphate to indole and glyceraldehyde 3-phosphate. The chain is Tryptophan synthase alpha chain from Afipia carboxidovorans (strain ATCC 49405 / DSM 1227 / KCTC 32145 / OM5) (Oligotropha carboxidovorans).